Here is a 150-residue protein sequence, read N- to C-terminus: Small ribosomal subunit protein uS11x (150 aa).

It belongs to the universal ribosomal protein uS11 family.

The protein localises to the cytoplasm. The sequence is that of Small ribosomal subunit protein uS11x (RPS14C) from Arabidopsis thaliana (Mouse-ear cress).